The following is a 342-amino-acid chain: GTPase Obg (342 aa).

In terms of domain architecture, Obg spans 1-159 (MKFLDLCKVY…RTIWLRLKLI (159 aa)). The OBG-type G domain maps to 160–327 (ADAGLLGLPN…VLRALWAEID (168 aa)). GTP is bound by residues 166–173 (GLPNAGKS), 191–195 (FTTLV), 212–215 (DIPG), 279–282 (NKID), and 308–310 (SGV). Residues Ser173 and Thr193 each contribute to the Mg(2+) site.

The protein belongs to the TRAFAC class OBG-HflX-like GTPase superfamily. OBG GTPase family. As to quaternary structure, monomer. Mg(2+) is required as a cofactor.

The protein localises to the cytoplasm. An essential GTPase which binds GTP, GDP and possibly (p)ppGpp with moderate affinity, with high nucleotide exchange rates and a fairly low GTP hydrolysis rate. Plays a role in control of the cell cycle, stress response, ribosome biogenesis and in those bacteria that undergo differentiation, in morphogenesis control. In Cereibacter sphaeroides (strain ATCC 17025 / ATH 2.4.3) (Rhodobacter sphaeroides), this protein is GTPase Obg.